The following is a 158-amino-acid chain: MHEGVQVSSKLEQLQALLAPVVVALGYECWGIEFSAQGRHSLLRVYIDKEGGVLVDDCAIVSRQISGVLDVEDPISVEYTLEVSSPGMERPLFTLEQFAKYVGEQVKIKLRSPFEGRRNFQGLLRGVEEQDVVVQVDDHEFLLPIDMIDKANIIPSFD.

Belongs to the RimP family.

The protein resides in the cytoplasm. Required for maturation of 30S ribosomal subunits. This Pseudomonas fluorescens (strain ATCC BAA-477 / NRRL B-23932 / Pf-5) protein is Ribosome maturation factor RimP.